The chain runs to 168 residues: Cytochrome c-type biogenesis protein CcmE (168 aa).

Over 1-7 (MTRKKRR) the chain is Cytoplasmic. Residues 8 to 28 (LYMLGLALLGLGTATALTLSA) form a helical; Signal-anchor for type II membrane protein membrane-spanning segment. Residues 29 to 168 (FEENIVFFYS…KVHATTTLKP (140 aa)) are Periplasmic-facing. His-122 and Tyr-126 together coordinate heme. The tract at residues 149-168 (SIYTPADSDDKVHATTTLKP) is disordered.

It belongs to the CcmE/CycJ family.

The protein localises to the cell inner membrane. In terms of biological role, heme chaperone required for the biogenesis of c-type cytochromes. Transiently binds heme delivered by CcmC and transfers the heme to apo-cytochromes in a process facilitated by CcmF and CcmH. The chain is Cytochrome c-type biogenesis protein CcmE from Rhodospirillum centenum (strain ATCC 51521 / SW).